The following is a 475-amino-acid chain: ATP synthase subunit beta, chloroplastic (475 aa).

156-163 (GGAGVGKT) lines the ATP pocket.

This sequence belongs to the ATPase alpha/beta chains family. In terms of assembly, F-type ATPases have 2 components, CF(1) - the catalytic core - and CF(0) - the membrane proton channel. CF(1) has five subunits: alpha(3), beta(3), gamma(1), delta(1), epsilon(1). CF(0) has four main subunits: a(1), b(1), b'(1) and c(9-12).

It localises to the plastid. The protein resides in the chloroplast thylakoid membrane. The catalysed reaction is ATP + H2O + 4 H(+)(in) = ADP + phosphate + 5 H(+)(out). Its function is as follows. Produces ATP from ADP in the presence of a proton gradient across the membrane. The catalytic sites are hosted primarily by the beta subunits. The protein is ATP synthase subunit beta, chloroplastic of Phaeodactylum tricornutum (strain CCAP 1055/1).